The sequence spans 289 residues: Transcription factor MafA (289 aa).

A compositionally biased stretch (low complexity) spans 52-73 (STPISTPCSSVPSSPSFCAPSP). Disordered stretches follow at residues 52 to 87 (STPISTPCSSVPSSPSFCAPSPGAQSGVNPSNPNAA) and 126 to 164 (HHHHHHHQGYDGFRGQQYPGDEMAPSGHHHQVHHHHHHH). A compositionally biased stretch (polar residues) spans 74 to 87 (GAQSGVNPSNPNAA). Over residues 152–164 (GHHHQVHHHHHHH) the composition is skewed to basic residues. The segment at 201-226 (RLKQKRRTLKNRGYAQSCRYKRVQQR) is basic motif. Positions 201-264 (RLKQKRRTLK…DLYKDKYEKL (64 aa)) constitute a bZIP domain. Residues 229–250 (LETEKCQLQSQVEQLKQEVSRL) form a leucine-zipper region. A disordered region spans residues 266 to 289 (SRSFTTRESPPQGNPGKANADFFM). Residues 267–276 (RSFTTRESPP) show a composition bias toward polar residues.

Belongs to the bZIP family. Maf subfamily.

The protein localises to the nucleus. Its function is as follows. Transcription factor, possibly involved in transcription regulation during lens development. The chain is Transcription factor MafA (mafa) from Xenopus tropicalis (Western clawed frog).